Reading from the N-terminus, the 298-residue chain is Protein REVEILLE 8 (298 aa).

A disordered region spans residues 1–44 (MSSSPSRNPTNAEAPPPPPTSTDAVAEGSSKKVRKPYTITKSRE). Positions 38–92 (TITKSRESWTEEEHDKFLEALQLFDRDWKKIEDFVGSKTVIQIRSHAQKYFLKVQ) constitute an HTH myb-type domain. Residues 65-88 (WKKIEDFVGSKTVIQIRSHAQKYF) constitute a DNA-binding region (H-T-H motif). The tract at residues 96–123 (TLAHVPPPRPKRKAAHPYPQKASKNAQM) is disordered.

Its subcellular location is the nucleus. Transcriptional activator of evening element (EE)-containing clock-controlled genes. Forms a negative feedback loop with APRR5. Regulates the pattern of histone H3 acetylation of the TOC1 promoter. RVE4, RVE6 and RVE8 are components of the circadian system acting synergistically to regulate flowering time, redundantly to regulate leaf growth, and antagonistically to regulate hypocotyl elongation; their action seems independent of ZTL and HY5. The sequence is that of Protein REVEILLE 8 from Arabidopsis thaliana (Mouse-ear cress).